The sequence spans 478 residues: Aspartyl/glutamyl-tRNA(Asn/Gln) amidotransferase subunit B (478 aa).

This sequence belongs to the GatB/GatE family. GatB subfamily. As to quaternary structure, heterotrimer of A, B and C subunits.

It catalyses the reaction L-glutamyl-tRNA(Gln) + L-glutamine + ATP + H2O = L-glutaminyl-tRNA(Gln) + L-glutamate + ADP + phosphate + H(+). It carries out the reaction L-aspartyl-tRNA(Asn) + L-glutamine + ATP + H2O = L-asparaginyl-tRNA(Asn) + L-glutamate + ADP + phosphate + 2 H(+). In terms of biological role, allows the formation of correctly charged Asn-tRNA(Asn) or Gln-tRNA(Gln) through the transamidation of misacylated Asp-tRNA(Asn) or Glu-tRNA(Gln) in organisms which lack either or both of asparaginyl-tRNA or glutaminyl-tRNA synthetases. The reaction takes place in the presence of glutamine and ATP through an activated phospho-Asp-tRNA(Asn) or phospho-Glu-tRNA(Gln). This chain is Aspartyl/glutamyl-tRNA(Asn/Gln) amidotransferase subunit B, found in Syntrophotalea carbinolica (strain DSM 2380 / NBRC 103641 / GraBd1) (Pelobacter carbinolicus).